A 307-amino-acid chain; its full sequence is Protoheme IX farnesyltransferase (307 aa).

8 consecutive transmembrane segments (helical) span residues 32-52, 54-74, 105-125, 126-146, 169-189, 222-242, 244-264, and 287-307; these read VVEL…RGIP, LWLV…AGAF, LVFA…FTNW, LAAG…TLIL, WAVV…VIFL, VVGL…LLLI, VARM…WFLY, and GSIA…LLPF.

This sequence belongs to the UbiA prenyltransferase family. Protoheme IX farnesyltransferase subfamily.

It localises to the cell membrane. It catalyses the reaction heme b + (2E,6E)-farnesyl diphosphate + H2O = Fe(II)-heme o + diphosphate. The protein operates within porphyrin-containing compound metabolism; heme O biosynthesis; heme O from protoheme: step 1/1. Functionally, converts heme B (protoheme IX) to heme O by substitution of the vinyl group on carbon 2 of heme B porphyrin ring with a hydroxyethyl farnesyl side group. This is Protoheme IX farnesyltransferase from Leifsonia xyli subsp. xyli (strain CTCB07).